The following is a 92-amino-acid chain: DNA-directed RNA polymerase subunit omega (92 aa).

This sequence belongs to the RNA polymerase subunit omega family. In terms of assembly, the RNAP catalytic core consists of 2 alpha, 1 beta, 1 beta' and 1 omega subunit. When a sigma factor is associated with the core the holoenzyme is formed, which can initiate transcription.

It catalyses the reaction RNA(n) + a ribonucleoside 5'-triphosphate = RNA(n+1) + diphosphate. Promotes RNA polymerase assembly. Latches the N- and C-terminal regions of the beta' subunit thereby facilitating its interaction with the beta and alpha subunits. This Corynebacterium diphtheriae (strain ATCC 700971 / NCTC 13129 / Biotype gravis) protein is DNA-directed RNA polymerase subunit omega.